The following is a 204-amino-acid chain: Outer-membrane lipoprotein carrier protein (204 aa).

Residues 1 to 21 (MKKYLNLTALLLVGISNVTWA) form the signal peptide.

This sequence belongs to the LolA family. In terms of assembly, monomer.

It localises to the periplasm. Its function is as follows. Participates in the translocation of lipoproteins from the inner membrane to the outer membrane. Only forms a complex with a lipoprotein if the residue after the N-terminal Cys is not an aspartate (The Asp acts as a targeting signal to indicate that the lipoprotein should stay in the inner membrane). This is Outer-membrane lipoprotein carrier protein from Histophilus somni (strain 2336) (Haemophilus somnus).